Reading from the N-terminus, the 160-residue chain is Ureidoglycolate lyase (160 aa).

It belongs to the ureidoglycolate lyase family. As to quaternary structure, homodimer. Ni(2+) is required as a cofactor.

It catalyses the reaction (S)-ureidoglycolate = urea + glyoxylate. It participates in nitrogen metabolism; (S)-allantoin degradation. In terms of biological role, catalyzes the catabolism of the allantoin degradation intermediate (S)-ureidoglycolate, generating urea and glyoxylate. Involved in the anaerobic utilization of allantoin as sole nitrogen source. Reinforces the induction of genes involved in the degradation of allantoin and glyoxylate by producing glyoxylate. The protein is Ureidoglycolate lyase of Escherichia coli (strain SMS-3-5 / SECEC).